Here is a 168-residue protein sequence, read N- to C-terminus: Shikimate kinase (168 aa).

Residue 12–17 (GAGKST) coordinates ATP. Residue Ser16 coordinates Mg(2+). Residues Asp34, Arg58, and Gly80 each coordinate substrate. Arg117 contacts ATP. Arg136 contacts substrate. Arg153 is an ATP binding site.

This sequence belongs to the shikimate kinase family. As to quaternary structure, monomer. It depends on Mg(2+) as a cofactor.

The protein resides in the cytoplasm. It carries out the reaction shikimate + ATP = 3-phosphoshikimate + ADP + H(+). It functions in the pathway metabolic intermediate biosynthesis; chorismate biosynthesis; chorismate from D-erythrose 4-phosphate and phosphoenolpyruvate: step 5/7. Its function is as follows. Catalyzes the specific phosphorylation of the 3-hydroxyl group of shikimic acid using ATP as a cosubstrate. This chain is Shikimate kinase, found in Rhodococcus jostii (strain RHA1).